We begin with the raw amino-acid sequence, 303 residues long: Elongation factor Ts (303 aa).

The involved in Mg(2+) ion dislocation from EF-Tu stretch occupies residues 80–83 (TDFV).

This sequence belongs to the EF-Ts family.

It localises to the cytoplasm. Its function is as follows. Associates with the EF-Tu.GDP complex and induces the exchange of GDP to GTP. It remains bound to the aminoacyl-tRNA.EF-Tu.GTP complex up to the GTP hydrolysis stage on the ribosome. This Clostridium botulinum (strain Alaska E43 / Type E3) protein is Elongation factor Ts.